Reading from the N-terminus, the 505-residue chain is Sucrose porin (505 aa).

An N-terminal signal peptide occupies residues 1 to 22; it reads MYRKSTLAMLIALLTSAASAHA. The tract at residues 44–87 is disordered; it reads ENRAQTAENRAGAAEKKVQQLTAQQQKNQNSTQEVAQRTARLEK. Low complexity predominate over residues 62 to 72; sequence QQLTAQQQKNQ.

It belongs to the porin LamB (TC 1.B.3) family. Homotrimer.

The protein localises to the cell outer membrane. In terms of biological role, porin for sucrose uptake. This chain is Sucrose porin (scrY), found in Salmonella typhimurium.